We begin with the raw amino-acid sequence, 274 residues long: Diaminopimelate epimerase (274 aa).

Substrate-binding residues include N11 and N65. C74 acts as the Proton donor in catalysis. Substrate is bound by residues 75-76 (GN), N158, N191, and 209-210 (ER). C218 serves as the catalytic Proton acceptor. Residue 219–220 (GT) participates in substrate binding.

It belongs to the diaminopimelate epimerase family. As to quaternary structure, homodimer.

Its subcellular location is the cytoplasm. The catalysed reaction is (2S,6S)-2,6-diaminopimelate = meso-2,6-diaminopimelate. Its pathway is amino-acid biosynthesis; L-lysine biosynthesis via DAP pathway; DL-2,6-diaminopimelate from LL-2,6-diaminopimelate: step 1/1. In terms of biological role, catalyzes the stereoinversion of LL-2,6-diaminopimelate (L,L-DAP) to meso-diaminopimelate (meso-DAP), a precursor of L-lysine and an essential component of the bacterial peptidoglycan. In Carboxydothermus hydrogenoformans (strain ATCC BAA-161 / DSM 6008 / Z-2901), this protein is Diaminopimelate epimerase.